The following is a 176-amino-acid chain: Ribosome maturation factor RimM (176 aa).

The 80-residue stretch at 97–176 folds into the PRC barrel domain; that stretch reads EDEFYWRDLI…QILVDWDPDF (80 aa).

Belongs to the RimM family. In terms of assembly, binds ribosomal protein uS19.

The protein resides in the cytoplasm. Its function is as follows. An accessory protein needed during the final step in the assembly of 30S ribosomal subunit, possibly for assembly of the head region. Essential for efficient processing of 16S rRNA. May be needed both before and after RbfA during the maturation of 16S rRNA. It has affinity for free ribosomal 30S subunits but not for 70S ribosomes. The chain is Ribosome maturation factor RimM from Shewanella putrefaciens (strain CN-32 / ATCC BAA-453).